A 212-amino-acid chain; its full sequence is Adenylate kinase (212 aa).

10–15 (GAGKGT) provides a ligand contact to ATP. Positions 30–59 (STGDMFRAAMANQTEMGVLAKSYIDKGELV) are NMP. Residues T31, R36, 57–59 (ELV), 86–89 (GYPR), and Q93 each bind AMP. Residues 127 to 159 (GRIIHRQTGETFHKVFNPPANYNEEDYYQREDD) form an LID region. Residues R128 and 137 to 138 (TF) contribute to the ATP site. Residues R156 and R167 each coordinate AMP. ATP is bound at residue Q195.

It belongs to the adenylate kinase family. Monomer.

The protein resides in the cytoplasm. It catalyses the reaction AMP + ATP = 2 ADP. It functions in the pathway purine metabolism; AMP biosynthesis via salvage pathway; AMP from ADP: step 1/1. Catalyzes the reversible transfer of the terminal phosphate group between ATP and AMP. Plays an important role in cellular energy homeostasis and in adenine nucleotide metabolism. The chain is Adenylate kinase from Streptococcus gordonii (strain Challis / ATCC 35105 / BCRC 15272 / CH1 / DL1 / V288).